The following is a 485-amino-acid chain: E3 ubiquitin-protein ligase rnf8 (485 aa).

Residues 43–97 (VSVGRGLNVTHQILSSSCPLMISRIHCVFKLNEGRQWTVTDNKSLNGVWVNGKRI) enclose the FHA domain. Positions 150–232 (AASLSQKLKN…SSTCSDSSQH (83 aa)) are disordered. The span at 199–219 (GERRETLKLSSRPLEEDRDKA) shows a compositional bias: basic and acidic residues. Over residues 221-230 (SSSSTCSDSS) the composition is skewed to low complexity. The RING-type zinc-finger motif lies at 392-430 (CSICSELFIEAVTLNCAHSFCQHCISEWRNRKDKCPMCW).

This sequence belongs to the RNF8 family. Homodimer. Forms a E2-E3 ubiquitin ligase complex composed of the rnf8 homodimer and a E2 heterodimer of ube2n and ube2v2.

It is found in the nucleus. The catalysed reaction is S-ubiquitinyl-[E2 ubiquitin-conjugating enzyme]-L-cysteine + [acceptor protein]-L-lysine = [E2 ubiquitin-conjugating enzyme]-L-cysteine + N(6)-ubiquitinyl-[acceptor protein]-L-lysine.. It participates in protein modification; protein ubiquitination. Its function is as follows. E3 ubiquitin-protein ligase that plays a key role in DNA damage signaling via 2 distinct roles: by mediating the 'Lys-63'-linked ubiquitination of histones H2A and H2AX and promoting the recruitment of DNA repair proteins at double-strand breaks (DSBs) sites, and by catalyzing 'Lys-48'-linked ubiquitination to remove target proteins from DNA damage sites. Following DNA DSBs, it is recruited to the sites of damage by ATM-phosphorylated mdc1 and catalyzes the 'Lys-63'-linked ubiquitination of histones H2A and H2AX. H2A ubiquitination also mediates the ATM-dependent transcriptional silencing at regions flanking DSBs in cis, a mechanism to avoid collision between transcription and repair intermediates. Also catalyzes the formation of 'Lys-48'-linked polyubiquitin chains, leading to degradation of substrate proteins. In addition to its function in damage signaling, also plays a role in higher-order chromatin structure by mediating extensive chromatin decondensation. The protein is E3 ubiquitin-protein ligase rnf8 of Danio rerio (Zebrafish).